A 71-amino-acid chain; its full sequence is uncharacterized protein (71 aa).

Residues 44–66 (LFFLVFRRLFSWFLVLLPSPRFF) traverse the membrane as a helical segment.

It localises to the membrane. This is an uncharacterized protein from Saccharomyces cerevisiae (strain ATCC 204508 / S288c) (Baker's yeast).